The primary structure comprises 427 residues: Septin-8-A (427 aa).

One can recognise a Septin-type G domain in the interval 39-305 (QGFCFNILCV…ELYRRCKLEE (267 aa)). Residues 49 to 56 (GETGIGKS) are G1 motif. GTP is bound by residues 49–56 (GETGIGKS), Gly104, 185–193 (KADTISKSE), Gly239, and Arg254. The G3 motif stretch occupies residues 101 to 104 (DTVG). The interval 184–187 (AKAD) is G4 motif. Residues 320-409 (LQETYEAKRK…KAAMEALQSQ (90 aa)) are a coiled coil. Residues 376–389 (QEESKKVEDKRRDL) are compositionally biased toward basic and acidic residues. The tract at residues 376–427 (QEESKKVEDKRRDLEEEMNSFNRRKAAMEALQSQSFQATSQQPLKKDKDRKN) is disordered. Over residues 406-418 (LQSQSFQATSQQP) the composition is skewed to polar residues.

The protein belongs to the TRAFAC class TrmE-Era-EngA-EngB-Septin-like GTPase superfamily. Septin GTPase family.

The chain is Septin-8-A (sept8-a) from Xenopus laevis (African clawed frog).